A 263-amino-acid chain; its full sequence is Purine nucleoside phosphorylase SACOL1200 (263 aa).

Positions 79, 124, and 141 each coordinate Zn(2+).

Belongs to the purine nucleoside phosphorylase YfiH/LACC1 family. In terms of assembly, homodimer. Cu(2+) is required as a cofactor. It depends on Zn(2+) as a cofactor.

It catalyses the reaction adenosine + phosphate = alpha-D-ribose 1-phosphate + adenine. The catalysed reaction is S-methyl-5'-thioadenosine + phosphate = 5-(methylsulfanyl)-alpha-D-ribose 1-phosphate + adenine. The enzyme catalyses inosine + phosphate = alpha-D-ribose 1-phosphate + hypoxanthine. It carries out the reaction adenosine + H2O + H(+) = inosine + NH4(+). Functionally, purine nucleoside enzyme that catalyzes the phosphorolysis of adenosine and inosine nucleosides, yielding D-ribose 1-phosphate and the respective free bases, adenine and hypoxanthine. Also catalyzes the phosphorolysis of S-methyl-5'-thioadenosine into adenine and S-methyl-5-thio-alpha-D-ribose 1-phosphate. Also has adenosine deaminase activity. The protein is Purine nucleoside phosphorylase SACOL1200 of Staphylococcus aureus (strain COL).